We begin with the raw amino-acid sequence, 328 residues long: Versiconal hemiacetal acetate esterase (328 aa).

An Involved in the stabilization of the negatively charged intermediate by the formation of the oxyanion hole motif is present at residues 82-84; that stretch reads HGG. Catalysis depends on residues serine 156, aspartate 260, and histidine 290.

It belongs to the 'GDXG' lipolytic enzyme family.

It carries out the reaction (2S,3S)-versiconal hemiacetal acetate + H2O = (2S-3S)-versiconal hemiacetal + acetate + H(+). It catalyses the reaction (3S)-versiconol acetate + H2O = (S)-versiconol + acetate + H(+). It functions in the pathway mycotoxin biosynthesis. In terms of biological role, versiconal hemiacetal acetate esterase; part of the fragmented gene cluster that mediates the biosynthesis of dothistromin (DOTH), a polyketide toxin very similar in structure to the aflatoxin precursor, versicolorin B. The first step of the pathway is the conversion of acetate to norsolorinic acid (NOR) and requires the fatty acid synthase subunits hexA and hexB, as well as the polyketide synthase pksA. PksA combines a hexanoyl starter unit and 7 malonyl-CoA extender units to synthesize the precursor NOR. The hexanoyl starter unit is provided to the acyl-carrier protein (ACP) domain by the fungal fatty acid synthase hexA/hexB. The second step is the conversion of NOR to averantin (AVN) and requires the norsolorinic acid ketoreductase nor1, which catalyzes the dehydration of norsolorinic acid to form (1'S)-averantin. The cytochrome P450 monooxygenase avnA then catalyzes the hydroxylation of AVN to 5'hydroxyaverantin (HAVN). The next step is performed by adhA that transforms HAVN to averufin (AVF). Averufin might then be converted to hydroxyversicolorone by cypX and avfA. Hydroxyversicolorone is further converted versiconal hemiacetal acetate (VHA) by moxY. VHA is then the substrate for the versiconal hemiacetal acetate esterase est1 to yield versiconal (VAL). Versicolorin B synthase vbsA then converts VAL to versicolorin B (VERB) by closing the bisfuran ring. Then, the activity of the versicolorin B desaturase verB leads to versicolorin A (VERA). DotB, a predicted chloroperoxidase, may perform epoxidation of the A-ring of VERA. Alternatively, a cytochrome P450, such as cypX or avnA could catalyze this step. It is also possible that another, uncharacterized, cytochrome P450 enzyme is responsible for this step. Opening of the epoxide could potentially be achieved by the epoxide hydrolase epoA. However, epoA seems not to be required for DOTH biosynthesis, but other epoxide hydrolases may have the ability to complement this hydrolysis. Alternatively, opening of the epoxide ring could be achieved non-enzymatically. The next step is the deoxygenation of ring A to yield the 5,8-dihydroxyanthraquinone which is most likely catalyzed by the NADPH dehydrogenase encoded by ver1. The last stages of DOTH biosynthesis are proposed to involve hydroxylation of the bisfuran. OrdB and norB might have oxidative roles here. An alternative possibility is that cytochrome P450 monoogenases such as avnA and cypX might perform these steps in addition to previously proposed steps. The polypeptide is Versiconal hemiacetal acetate esterase (Dothistroma septosporum (strain NZE10 / CBS 128990) (Red band needle blight fungus)).